Consider the following 82-residue polypeptide: Putative membrane protein insertion efficiency factor (82 aa).

It belongs to the UPF0161 family.

The protein localises to the cell inner membrane. Could be involved in insertion of integral membrane proteins into the membrane. In Rickettsia africae (strain ESF-5), this protein is Putative membrane protein insertion efficiency factor.